The sequence spans 582 residues: Proline--tRNA ligase (582 aa).

It belongs to the class-II aminoacyl-tRNA synthetase family. ProS type 1 subfamily. Homodimer.

The protein resides in the cytoplasm. The enzyme catalyses tRNA(Pro) + L-proline + ATP = L-prolyl-tRNA(Pro) + AMP + diphosphate. In terms of biological role, catalyzes the attachment of proline to tRNA(Pro) in a two-step reaction: proline is first activated by ATP to form Pro-AMP and then transferred to the acceptor end of tRNA(Pro). As ProRS can inadvertently accommodate and process non-cognate amino acids such as alanine and cysteine, to avoid such errors it has two additional distinct editing activities against alanine. One activity is designated as 'pretransfer' editing and involves the tRNA(Pro)-independent hydrolysis of activated Ala-AMP. The other activity is designated 'posttransfer' editing and involves deacylation of mischarged Ala-tRNA(Pro). The misacylated Cys-tRNA(Pro) is not edited by ProRS. In Mycobacterium tuberculosis (strain CDC 1551 / Oshkosh), this protein is Proline--tRNA ligase.